Consider the following 447-residue polypeptide: MAPDPVPTPGPASAQLRQTRYFTWEEVAQRSGREKERWLVIDRKVYNISDFSRRHPGGSRVISHYAGQDATDPFVAFHINKGLVRKYMNSLLIGELAPEQPSFEPTKNKALTDEFRELRATVERMGLMKANHLFFLVYLLHILLLDVAAWLTLWIFGTSLVPFILCAVLLSTVQAQAGWLQHDFGHLSVFGTSTWNHLLHHFVIGHLKGAPASWWNHMHFQHHAKPNCFRKDPDINMHPLFFALGKVLPVELGREKKKHMPYNHQHKYFFLIGPPALLPLYFQWYIFYFVVQRKKWVDLAWMLSFYARIFFTYMPLLGLKGFLGLFFIVRFLESNWFVWVTQMNHIPMHIDHDRNVDWVSTQLQATCNVHQSAFNNWFSGHLNFQIEHHLFPTMPRHNYHKVAPLVQSLCAKYGIKYESKPLLTAFADIVYSLKESGQLWLDAYLHQ.

Met1 bears the N-acetylmethionine mark. The Cytoplasmic segment spans residues 1 to 124; the sequence is MAPDPVPTPG…FRELRATVER (124 aa). In terms of domain architecture, Cytochrome b5 heme-binding spans 19–97; it reads TRYFTWEEVA…MNSLLIGELA (79 aa). The helical transmembrane segment at 125–145 threads the bilayer; that stretch reads MGLMKANHLFFLVYLLHILLL. Residues 146-160 lie on the Lumenal side of the membrane; sequence DVAAWLTLWIFGTSL. Residues 161 to 180 form a helical membrane-spanning segment; the sequence is VPFILCAVLLSTVQAQAGWL. Residues 181–268 are Cytoplasmic-facing; that stretch reads QHDFGHLSVF…HMPYNHQHKY (88 aa). The short motif at 182-186 is the Histidine box-1 element; sequence HDFGH. Positions 219–223 match the Histidine box-2 motif; it reads HFQHH. The chain crosses the membrane as a helical span at residues 269 to 289; the sequence is FFLIGPPALLPLYFQWYIFYF. Topologically, residues 290–308 are lumenal; sequence VVQRKKWVDLAWMLSFYAR. A helical transmembrane segment spans residues 309-329; that stretch reads IFFTYMPLLGLKGFLGLFFIV. Topologically, residues 330-447 are cytoplasmic; that stretch reads RFLESNWFVW…QLWLDAYLHQ (118 aa). Residues 385 to 389 carry the Histidine box-3 motif; sequence QIEHH.

This sequence belongs to the fatty acid desaturase type 1 family. As to expression, highly expressed in the adrenal gland, liver, brain, and testis, tissues where lipogenesis and steroidogenesis are active. Expressed in colonic mucosa.

It is found in the endoplasmic reticulum membrane. Its subcellular location is the mitochondrion. It carries out the reaction (8Z,11Z,14Z)-eicosatrienoyl-CoA + 2 Fe(II)-[cytochrome b5] + O2 + 2 H(+) = (5Z,8Z,11Z,14Z)-eicosatetraenoyl-CoA + 2 Fe(III)-[cytochrome b5] + 2 H2O. The enzyme catalyses (8Z,11Z,14Z,17Z)-eicosatetraenoyl-CoA + 2 Fe(II)-[cytochrome b5] + O2 + 2 H(+) = (5Z,8Z,11Z,14Z,17Z)-eicosapentaenoyl-CoA + 2 Fe(III)-[cytochrome b5] + 2 H2O. The catalysed reaction is (11E)-octadecenoyl-CoA + 2 Fe(II)-[cytochrome b5] + O2 + 2 H(+) = (5Z,11E)-octadecadienoyl-CoA + 2 Fe(III)-[cytochrome b5] + 2 H2O. Its pathway is lipid metabolism; polyunsaturated fatty acid biosynthesis. In terms of biological role, acts as a front-end fatty acyl-coenzyme A (CoA) desaturase that introduces a cis double bond at carbon 5 located between a preexisting double bond and the carboxyl end of the fatty acyl chain. Involved in biosynthesis of highly unsaturated fatty acids (HUFA) from the essential polyunsaturated fatty acids (PUFA) linoleic acid (LA) (18:2n-6) and alpha-linolenic acid (ALA) (18:3n-3) precursors. Specifically, desaturates dihomo-gamma-linoleoate (DGLA) (20:3n-6) and eicosatetraenoate (ETA) (20:4n-3) to generate arachidonate (AA) (20:4n-6) and eicosapentaenoate (EPA) (20:5n-3), respectively. As a rate limiting enzyme for DGLA (20:3n-6) and AA (20:4n-6)-derived eicosanoid biosynthesis, controls the metabolism of inflammatory lipids like prostaglandin E2, critical for efficient acute inflammatory response and maintenance of epithelium homeostasis. Contributes to membrane phospholipid biosynthesis by providing AA (20:4n-6) as a major acyl chain esterified into phospholipids. In particular, regulates phosphatidylinositol-4,5-bisphosphate levels, modulating inflammatory cytokine production in T-cells. Also desaturates (11E)-octadecenoate (trans-vaccenoate)(18:1n-9), a metabolite in the biohydrogenation pathway of LA (18:2n-6). In Mus musculus (Mouse), this protein is Acyl-CoA (8-3)-desaturase.